The primary structure comprises 738 residues: Nucleoprotein (738 aa).

Residues 334-363 are a coiled coil; it reads VNVGEQYQQLREAATEAEKQLQQYAETREL. Residues 418 to 640 are disordered; that stretch reads GDRYPDDNDI…QGSESEALPI (223 aa). Acidic residues predominate over residues 461–476; the sequence is PYDDESNNYPDYEDSA. A compositionally biased stretch (polar residues) spans 544–564; that stretch reads PGSNTNQPQGNMSSTLQSMTP. The span at 567 to 594 shows a compositional bias: acidic residues; sequence EESEPDDQKDDDDESLTSLDSEGDEDVE. Polar residues predominate over residues 616–625; that stretch reads VDTNQQNGPS.

This sequence belongs to the filoviruses nucleoprotein family. In terms of assembly, homooligomer. Homomultimerizes to form the nucleocapsid. Binds to viral genomic RNA. Interacts with VP35 and VP30 to form the nucleocapsid. Interacts with host PPP2R5C; this interaction leads to VP30 dephosphorylation and viral transcription. Interacts with VP24; this interaction facilitates nucleocapsid assembly and genome packaging. Interacts with matrix protein VP40; this interaction allows recruitment of the nucleocapsid into progeny virions. Interacts with host STAU1. Interacts with host NXF1 (via RNA-binding domain); this interaction recruits NXF1 to the inclusion bodies were viral replication takes place, probably to export viral mRNA-NXF1 complexes from these sites. Interacts with host CCDC92; this interaction sequesters NP in the host cytoplasm. Interacts with host TRIM14. Phosphorylated and O-glycosylated by host. Acetylated by host EP300 in vitro.

Its subcellular location is the virion. It localises to the host cytoplasm. Oligomerizes into helical capsid to encapsidate the viral genome, protecting it from nucleases and the cellular innate immune response. VP35 binds to and stabilizes monomeric NP, keeping it soluble. Upon virus replication, NP is recruited to bind cooperatively viral genomic RNA and VP35 is released. The encapsidated genomic RNA is termed the nucleocapsid and serves as template for transcription and replication. The nucleocapsid is helical with a pitch of 10.81 NP per turn and a diameter of about 22nm. Each NP binds to six nucleotides of viral genomic RNA, three being exposed to the solvant and three hidden into the nucleocapsid. Also recruits host PPP2R5C phosphatase to dephosphorylate VP30 and thereby promote viral transcription. Upon virion assembly and budding, NP binds to VP24 and possibly host STAU1. This Sudan ebolavirus (strain Human/Uganda/Gulu/2000) (SEBOV) protein is Nucleoprotein (NP).